A 317-amino-acid chain; its full sequence is Nicotianamine synthase (317 aa).

It belongs to the nicotianamine synthase (NAS)-like family. As to quaternary structure, homomultimer. Leaves and roots.

The enzyme catalyses 3 S-adenosyl-L-methionine = nicotianamine + 3 S-methyl-5'-thioadenosine + 3 H(+). In terms of biological role, synthesizes nicotianamine, a polyamine that serves as a sensor for the physiological iron status within the plant, and/or might be involved in the transport of iron. This Solanum lycopersicum (Tomato) protein is Nicotianamine synthase (CHLN).